The primary structure comprises 647 residues: Leucine aminopeptidase 2 (647 aa).

Residues 169–171 (QCQ) and 295–300 (PYGGME) contribute to the substrate site. His-324 is a Zn(2+) binding site. Glu-325 acts as the Proton acceptor in catalysis. Zn(2+)-binding residues include His-328 and Glu-347. Tyr-418 serves as the catalytic Proton donor.

This sequence belongs to the peptidase M1 family. It depends on Zn(2+) as a cofactor.

The protein localises to the cytoplasm. It is found in the nucleus. The enzyme catalyses an epoxide + H2O = an ethanediol. Functionally, aminopeptidase that preferentially cleaves di- and tripeptides. Also has low epoxide hydrolase activity (in vitro). Can hydrolyze the epoxide leukotriene LTA(4) but it forms preferentially 5,6-dihydroxy-7,9,11,14-eicosatetraenoic acid rather than the cytokine leukotriene B(4) as the product compared to the homologous mammalian enzyme (in vitro). This Yarrowia lipolytica (strain CLIB 122 / E 150) (Yeast) protein is Leucine aminopeptidase 2.